The primary structure comprises 217 residues: MIEIGENVLLEYIEENELKKAKSKAVSIENNELLIAYPVDVVTGRTVILHNDMEVTVEFVGKDEVPYRFISRIKGKVKDKLQMICLEMPPREKMKRIQRRQYVRTDAVLDVQIQPGNEEEIRTLSYNISAGGIAVVLADGLSFQSGESLRLIIRLPEEEHTRQIETEAVVRRIFNDPKSEKRKMTLEYSEIAAGDQQALLQYCIRRQLNKRRKARME.

Residues 98 to 203 (QRRQYVRTDA…GDQQALLQYC (106 aa)) form the PilZ domain.

This is an uncharacterized protein from Bacillus subtilis (strain 168).